A 100-amino-acid polypeptide reads, in one-letter code: NADH-quinone oxidoreductase subunit K 2 (100 aa).

The next 3 helical transmembrane spans lie at L2–V22, I29–F49, and F61–I81.

Belongs to the complex I subunit 4L family. NDH-1 is composed of 14 different subunits. Subunits NuoA, H, J, K, L, M, N constitute the membrane sector of the complex.

The protein resides in the cell inner membrane. The enzyme catalyses a quinone + NADH + 5 H(+)(in) = a quinol + NAD(+) + 4 H(+)(out). Functionally, NDH-1 shuttles electrons from NADH, via FMN and iron-sulfur (Fe-S) centers, to quinones in the respiratory chain. The immediate electron acceptor for the enzyme in this species is believed to be ubiquinone. Couples the redox reaction to proton translocation (for every two electrons transferred, four hydrogen ions are translocated across the cytoplasmic membrane), and thus conserves the redox energy in a proton gradient. The chain is NADH-quinone oxidoreductase subunit K 2 from Geobacter sp. (strain M21).